Reading from the N-terminus, the 450-residue chain is tRNA-aminoacylation cofactor arc1 (450 aa).

The interval 208–278 (QRPSVIKKDK…KEPPKAATPV (71 aa)) is disordered. Basic and acidic residues-rich tracts occupy residues 213–225 (IKKD…EGKP) and 233–247 (SVEK…AKKE). Residues 248–261 (KQNKKEKKDKKDKK) show a composition bias toward basic residues. The segment covering 262 to 272 (DKKEKAPKEPP) has biased composition (basic and acidic residues). The region spanning 278 to 382 (VPSMIDFRIG…ENAEIGDRLT (105 aa)) is the tRNA-binding domain.

Belongs to the tRNA-aminoacylation cofactor ARC1 family. Component of a yeast aminoacyl-tRNA synthase (aaRS) complex formed by methionyl-tRNA synthase, glutamyl-tRNA synthase and the tRNA aminoacylation cofactor arc1 in a stoichiometric complex. Interacts with rar1/mes1 and gus1.

The protein resides in the cytoplasm. In terms of biological role, binds to tRNA and functions as a cofactor for the methionyl-tRNA synthetase (MetRS) and glutamyl-tRNA synthetase (GluRS). Forms a complex with MetRS and GluRS and increases their affinity for cognate tRNAs due to the presence of a tRNA binding domain in its middle and C-terminal part. The sequence is that of tRNA-aminoacylation cofactor arc1 from Schizosaccharomyces pombe (strain 972 / ATCC 24843) (Fission yeast).